Consider the following 401-residue polypeptide: Elongation factor Tu, apicoplast (401 aa).

Residues Lys10 to Lys206 form the tr-type G domain. Positions Gly19–Thr26 are G1. Gly19 to Thr26 is a binding site for GTP. Thr26 is a binding site for Mg(2+). Residues Gly60–Lys64 form a G2 region. The interval Asp81–Gly84 is G3. Residues Asp81–His85 and Asn136–Asp139 each bind GTP. Positions Asn136–Asp139 are G4. Positions Ser173–Leu175 are G5.

The protein belongs to the TRAFAC class translation factor GTPase superfamily. Classic translation factor GTPase family. EF-Tu/EF-1A subfamily. Monomer.

It localises to the plastid. It is found in the apicoplast. It catalyses the reaction GTP + H2O = GDP + phosphate + H(+). In terms of biological role, GTP hydrolase that promotes the GTP-dependent binding of aminoacyl-tRNA to the A-site of ribosomes during protein biosynthesis. The polypeptide is Elongation factor Tu, apicoplast (tufA) (Toxoplasma gondii).